The sequence spans 161 residues: MTEQANSGAAAAESQNPQFSLQRIYVKDLSFEAPKSPEIFRQEWTPSVGLDLNTRQKTLEGDFHEVVLTLSVTVKNGEEVAFIAEVQQAGIFLIKGLDAASMSHTLGAFCPNILFPYAREALDSLVTRGSFPALMLSPVNFDALYAQELQRMQQAGEAAAH.

It belongs to the SecB family. In terms of assembly, homotetramer, a dimer of dimers. One homotetramer interacts with 1 SecA dimer.

It localises to the cytoplasm. In terms of biological role, one of the proteins required for the normal export of preproteins out of the cell cytoplasm. It is a molecular chaperone that binds to a subset of precursor proteins, maintaining them in a translocation-competent state. It also specifically binds to its receptor SecA. This chain is Protein-export protein SecB, found in Ectopseudomonas mendocina (strain ymp) (Pseudomonas mendocina).